The following is a 137-amino-acid chain: Fatty acid-binding protein homolog 7 (137 aa).

Belongs to the calycin superfamily. Fatty-acid binding protein (FABP) family.

The protein is Fatty acid-binding protein homolog 7 (lbp-7) of Caenorhabditis elegans.